A 417-amino-acid polypeptide reads, in one-letter code: Serine hydroxymethyltransferase (417 aa).

Residues L112 and 116–118 (GHL) each bind (6S)-5,6,7,8-tetrahydrofolate. Position 221 is an N6-(pyridoxal phosphate)lysine (K221). E247 provides a ligand contact to (6S)-5,6,7,8-tetrahydrofolate.

Belongs to the SHMT family. As to quaternary structure, homodimer. Pyridoxal 5'-phosphate serves as cofactor.

The protein localises to the cytoplasm. It carries out the reaction (6R)-5,10-methylene-5,6,7,8-tetrahydrofolate + glycine + H2O = (6S)-5,6,7,8-tetrahydrofolate + L-serine. The protein operates within one-carbon metabolism; tetrahydrofolate interconversion. Its pathway is amino-acid biosynthesis; glycine biosynthesis; glycine from L-serine: step 1/1. Its function is as follows. Catalyzes the reversible interconversion of serine and glycine with tetrahydrofolate (THF) serving as the one-carbon carrier. This reaction serves as the major source of one-carbon groups required for the biosynthesis of purines, thymidylate, methionine, and other important biomolecules. Also exhibits THF-independent aldolase activity toward beta-hydroxyamino acids, producing glycine and aldehydes, via a retro-aldol mechanism. This is Serine hydroxymethyltransferase from Borrelia duttonii (strain Ly).